Reading from the N-terminus, the 126-residue chain is Protein chibby homolog 1 (126 aa).

A compositionally biased stretch (polar residues) spans 1–10; sequence MPFFGNTFSP. Positions 1–26 are disordered; the sequence is MPFFGNTFSPKKTPPRKSASLSNLHS. Serine 9 and serine 20 each carry phosphoserine. The interval 60-112 is minimal region for the interaction with PKD2; that stretch reads IAETGVSGGVDRREVQRLRRRNQQLEEENNLLRLKVDILLDMLSESTAESHLM. Positions 67 to 125 form a coiled coil; the sequence is GGVDRREVQRLRRRNQQLEEENNLLRLKVDILLDMLSESTAESHLMEKELDELRISRKR. Residues 77 to 98 form a leucine-zipper; mediates homodimerization region; the sequence is LRRRNQQLEEENNLLRLKVDIL.

This sequence belongs to the chibby family. As to quaternary structure, homodimer. Homodimerization is essential for nuclear localization and interaction with KPNA4 but is dispensable for interaction with CTNNB1. Interacts with polycystin-2/PKD2 and GM130. Interacts with the C-terminal region of CTNNB1. Interacts (C-terminus) with TCIM (C-terminus), TCIM competes with CTNNB1 for the interaction with CBY1. Interacts with FAM92A; this interaction facilitates targeting of FAM92A to cilium basal body. Interacts with CIBAR2. Interacts with KPNA4. Widely expressed. Expressed at higher levels in heart, skeletal muscle, kidney and placenta. Also found in brain, lung, liver and testis. Significantly down-regulated in thyroid and metastatic uterine tumors.

It localises to the nucleus speckle. Its subcellular location is the cytoplasm. It is found in the cytoskeleton. The protein localises to the cilium basal body. The protein resides in the microtubule organizing center. It localises to the centrosome. Its subcellular location is the centriole. It is found in the golgi apparatus. The protein localises to the trans-Golgi network. The protein resides in the cell projection. It localises to the cilium. Its subcellular location is the flagellum. It is found in the nucleus. In terms of biological role, inhibits the Wnt/Wingless pathway by binding to CTNNB1/beta-catenin and inhibiting beta-catenin-mediated transcriptional activation through competition with TCF/LEF transcription factors. Has also been shown to play a role in regulating the intracellular trafficking of polycystin-2/PKD2 and possibly of other intracellular proteins. Promotes adipocyte and cardiomyocyte differentiation. This chain is Protein chibby homolog 1 (CBY1), found in Homo sapiens (Human).